The chain runs to 218 residues: Outer-membrane lipoprotein LolB (218 aa).

The first 24 residues, 1 to 24, serve as a signal peptide directing secretion; that stretch reads MNNLSYLTKIPLIWVLLSVTLLSA. C25 is lipidated: N-palmitoyl cysteine. Residue C25 is the site of S-diacylglycerol cysteine attachment.

This sequence belongs to the LolB family. In terms of assembly, monomer.

It localises to the cell outer membrane. Plays a critical role in the incorporation of lipoproteins in the outer membrane after they are released by the LolA protein. This is Outer-membrane lipoprotein LolB from Shewanella sediminis (strain HAW-EB3).